A 310-amino-acid chain; its full sequence is tRNA pseudouridine synthase B (310 aa).

D49 functions as the Nucleophile in the catalytic mechanism.

This sequence belongs to the pseudouridine synthase TruB family. Type 1 subfamily.

It carries out the reaction uridine(55) in tRNA = pseudouridine(55) in tRNA. In terms of biological role, responsible for synthesis of pseudouridine from uracil-55 in the psi GC loop of transfer RNAs. This is tRNA pseudouridine synthase B from Rhizobium etli (strain ATCC 51251 / DSM 11541 / JCM 21823 / NBRC 15573 / CFN 42).